The primary structure comprises 1168 residues: Protein VARIATION IN COMPOUND TRIGGERED ROOT growth response (1168 aa).

In terms of domain architecture, TIR spans 10 to 171; it reads WVYDVFLSFS…EIANDVLAKL (162 aa). The active site involves glutamate 85. Positions 187 to 452 constitute an NB-ARC domain; the sequence is EDHIANMSVL…ACLFNHVKVR (266 aa). 10 LRR repeats span residues 539-562, 606-629, 631-653, 676-699, 701-720, 721-744, 795-820, 839-865, 873-896, and 1065-1089; these read TSKVSEFCVHENAFKGMGNLLFLD, LRNLVKLEMHDSKLEKLWEGAMSF, CLKELDMWASKYLKEIPDLSKAT, LNKLLELNMEYCGELETLPTGFNL, SLDYLNFNECWKLRTFPEFA, TNISNLILAETSIEEYPSNLYFKN, LNNLERLDICYCRNLESLPTGINLES, STNIKYLDLDQTGIEEVPWQIENFFNL, CRELKCVSLNIFKLKHLGEVSFSN, and NVPLSQLNYDHVDINIHITSGDWRS.

Belongs to the disease resistance NB-LRR family. In terms of assembly, part of a nuclear protein complex made of VICTR, PAD4 and EDS1. Interacts (via TIR domain) with PAD4 and EDS1.

Its subcellular location is the cytoplasm. It localises to the nucleus. The enzyme catalyses NAD(+) + H2O = ADP-D-ribose + nicotinamide + H(+). Its function is as follows. Disease resistance protein of the TIR-NB-LRR-type. Part of the RPS6 locus that contains a cluster of several paralogous disease resistance (R) genes. Resistance proteins guard the plant against pathogens that contain an appropriate avirulence protein via an indirect interaction with this avirulence protein. That triggers a defense system including the hypersensitive response, which restricts the pathogen growth. Required for [5-(3,4-dichlorophenyl)furan-2-yl]-piperidine-1-ylmethanethione-(DFPM-) induced root growth arrest due to reduced number of meristem cells in the division zone of the primary root and inhibition of abscisic acid- (ABA-) induced stomatal closing. This Arabidopsis thaliana (Mouse-ear cress) protein is Protein VARIATION IN COMPOUND TRIGGERED ROOT growth response (VICTR).